The primary structure comprises 396 residues: MNEAVIDPILETAVNTGDMFCSQTIPNRCLKDTILIEVQPECADTLQCVLDDKVSRHQPLLLRNHKKLELPSEKSVTRGGFYMQQLELLVKSAPPNEYALLLIQCKDTALADEDNFFVANGVIDAGYRGVISALLYYRPGVTVILPGHLTIYLFPVKLRQSRLLPKNVLKHLDPIFKSIQVQPLSNSPSNYEKPVIPEFADISTVQQGQPLHRDSAEYHIDVPLTYKHIINPKRQEDAGYDICVPYNLYLKRNEFIKIVLPIIRDWDLQHPSINAYIFGRSSKSRSGIIVCPTAWPAGEHCKFYVYNLTGDDIRIKTGDRLAQVLLIDHNTQIHLKHNVLSNIAFPYAIRGKCGIPGVQWYFTKTLDLIATPSERGTRGFGSTDKETNDVDFLLKH.

Substrate-binding positions include 280 to 282 and 380 to 381; these read RSS and FG.

The protein belongs to the dUTPase family. Mg(2+) is required as a cofactor.

The catalysed reaction is dUTP + H2O = dUMP + diphosphate + H(+). Its function is as follows. Involved in nucleotide metabolism: produces dUMP, the immediate precursor of thymidine nucleotides and decreases the intracellular concentration of dUTP to avoid uracil incorporation into viral DNA. This chain is Deoxyuridine 5'-triphosphate nucleotidohydrolase, found in Varicella-zoster virus (strain Dumas) (HHV-3).